The sequence spans 264 residues: Merozoite surface protein 2 (264 aa).

A signal peptide spans 1–20; sequence MKVIKTLSIINFFIFVTFNI. N-linked (GlcNAc...) asparagine glycosylation is found at N22 and N36. Residues 44-190 are polymorphic region; the sequence is ANEGSNTNSV…PQTAENENPA (147 aa). Residues 46–225 are disordered; the sequence is EGSNTNSVGA…DSQKECTDGN (180 aa). Repeat copies occupy residues 60 to 91 and 92 to 123. A 2 X 32 AA perfects repeats region spans residues 60-123; sequence ADTIASGSQR…GESQTTTPTA (64 aa). Residues 70–81 are compositionally biased toward low complexity; it reads STNSASTSTTNN. Over residues 82-101 the composition is skewed to polar residues; the sequence is GESQTTTPTAADTIASGSQR. Low complexity predominate over residues 102-145; it reads STNSASTSTTNNGESQTTTPTAADTPTTTESNSPSPPITTTESS. An N-linked (GlcNAc...) asparagine glycan is attached at N152. The span at 154 to 166 shows a compositional bias: basic and acidic residues; the sequence is TDGKGEESEKQNE. Residues N168 and N213 are each glycosylated (N-linked (GlcNAc...) asparagine). Cysteines 221 and 229 form a disulfide. 2 N-linked (GlcNAc...) asparagine glycosylation sites follow: N237 and N238. Residue N238 is the site of GPI-anchor amidated asparagine attachment. The propeptide at 239–264 is removed in mature form; sequence SSNIASINKFVVLISATLVLSFAIFI.

It localises to the cell membrane. May play a role in the merozoite attachment to the erythrocyte. This is Merozoite surface protein 2 from Plasmodium falciparum (isolate fid3 / India).